A 161-amino-acid chain; its full sequence is Peptidyl-prolyl cis-trans isomerase-like 3 (161 aa).

Ser2 carries the N-acetylserine modification. The region spanning 2–154 is the PPIase cyclophilin-type domain; the sequence is SVTLHTDVGD…NDVHIKDITI (153 aa). The residue at position 61 (Arg61) is an Omega-N-methylarginine.

It belongs to the cyclophilin-type PPIase family. PPIL3 subfamily. Identified in the spliceosome C complex.

The enzyme catalyses [protein]-peptidylproline (omega=180) = [protein]-peptidylproline (omega=0). Its function is as follows. PPIases accelerate the folding of proteins. It catalyzes the cis-trans isomerization of proline imidic peptide bonds in oligopeptides. May be involved in pre-mRNA splicing. In Mus musculus (Mouse), this protein is Peptidyl-prolyl cis-trans isomerase-like 3 (Ppil3).